The primary structure comprises 215 residues: Cytochrome b6 (215 aa).

A helical transmembrane segment spans residues 32–52 (IFYCLGGITLTCFLVQVATGF). Position 35 (C35) interacts with heme c. Residues H86 and H100 each contribute to the heme b site. 3 consecutive transmembrane segments (helical) span residues 90 to 110 (ASMMVLMMILHVFRVYLTGGF), 116 to 136 (LTWVTGVVLAVLTASFGVTGY), and 186 to 206 (LHTFVLPLLTAVFMLMHFPMI). H187 and H202 together coordinate heme b.

This sequence belongs to the cytochrome b family. PetB subfamily. As to quaternary structure, the 4 large subunits of the cytochrome b6-f complex are cytochrome b6, subunit IV (17 kDa polypeptide, PetD), cytochrome f and the Rieske protein, while the 4 small subunits are PetG, PetL, PetM and PetN. The complex functions as a dimer. The cofactor is heme b. Heme c is required as a cofactor.

Its subcellular location is the plastid. The protein localises to the chloroplast thylakoid membrane. Component of the cytochrome b6-f complex, which mediates electron transfer between photosystem II (PSII) and photosystem I (PSI), cyclic electron flow around PSI, and state transitions. The sequence is that of Cytochrome b6 from Saccharum hybrid (Sugarcane).